We begin with the raw amino-acid sequence, 497 residues long: Bifunctional protein GlmU (497 aa).

The segment at 1-241 is pyrophosphorylase; it reads MSPETIGPAA…RWQVEGANDR (241 aa). Residues 14–17, lysine 28, glutamine 81, 86–87, 112–114, glycine 151, glutamate 166, asparagine 181, and asparagine 239 contribute to the UDP-N-acetyl-alpha-D-glucosamine site; these read LAAG, GT, and YGD. Residue aspartate 114 participates in Mg(2+) binding. Asparagine 239 serves as a coordination point for Mg(2+). A linker region spans residues 242-262; it reads IQLSALAAEHNRRIIESWMRA. Residues 263 to 497 are N-acetyltransferase; the sequence is GVTVVDPATT…QATIEEGKQA (235 aa). UDP-N-acetyl-alpha-D-glucosamine contacts are provided by arginine 344 and lysine 362. Histidine 374 (proton acceptor) is an active-site residue. UDP-N-acetyl-alpha-D-glucosamine-binding residues include tyrosine 377 and asparagine 388. Residues 397 to 398, serine 416, and alanine 434 each bind acetyl-CoA; that span reads NY.

In the N-terminal section; belongs to the N-acetylglucosamine-1-phosphate uridyltransferase family. The protein in the C-terminal section; belongs to the transferase hexapeptide repeat family. As to quaternary structure, homotrimer. It depends on Mg(2+) as a cofactor.

The protein localises to the cytoplasm. The catalysed reaction is alpha-D-glucosamine 1-phosphate + acetyl-CoA = N-acetyl-alpha-D-glucosamine 1-phosphate + CoA + H(+). It carries out the reaction N-acetyl-alpha-D-glucosamine 1-phosphate + UTP + H(+) = UDP-N-acetyl-alpha-D-glucosamine + diphosphate. It participates in nucleotide-sugar biosynthesis; UDP-N-acetyl-alpha-D-glucosamine biosynthesis; N-acetyl-alpha-D-glucosamine 1-phosphate from alpha-D-glucosamine 6-phosphate (route II): step 2/2. It functions in the pathway nucleotide-sugar biosynthesis; UDP-N-acetyl-alpha-D-glucosamine biosynthesis; UDP-N-acetyl-alpha-D-glucosamine from N-acetyl-alpha-D-glucosamine 1-phosphate: step 1/1. Its pathway is bacterial outer membrane biogenesis; LPS lipid A biosynthesis. Functionally, catalyzes the last two sequential reactions in the de novo biosynthetic pathway for UDP-N-acetylglucosamine (UDP-GlcNAc). The C-terminal domain catalyzes the transfer of acetyl group from acetyl coenzyme A to glucosamine-1-phosphate (GlcN-1-P) to produce N-acetylglucosamine-1-phosphate (GlcNAc-1-P), which is converted into UDP-GlcNAc by the transfer of uridine 5-monophosphate (from uridine 5-triphosphate), a reaction catalyzed by the N-terminal domain. The protein is Bifunctional protein GlmU of Paenarthrobacter aurescens (strain TC1).